The following is a 536-amino-acid chain: MELSLSFPVSWLCALFTAIALYCIAVAFYRLFLHPLAKFPGPFLWKISIWPTVWQCAHGKRHLDLLAAHKRHGPVVRIGPNMLSYNTGSAARTIYASRHANVRKSDFHLTVDASVSAPSLFSIVDREKHAFRRRVVSQAFTEKAMMDASEFYLKYMKVFLDVLHDKVGTGWTKVDIQEHATWWTSDTMGDLSLGRSFNCLTEPTFRHAIPMMRNGLRYIYWAGHLPFRDLVDYILAHPILSRYGGQSAVDNRNYFDFCETAIQERIKEEQDALAAGADEESRRKDYIHYLLAAVDPETGEKLTKNELESDASLLLAAGGDAMSNAIAGIMFYLARHDFARDRATAEIRHQFASAEDIRQGPGLAACTYLEACILESMRMAPPVATSPLERVTVGNGIEVDGHWFPAGITLGVCFYALNFNETIHKDPYRFRPERWLSSEEGITAEDVQQSKSNFFPFSAGHRHCPARNLASRNLKVFIANMLWHFDLRPATSLGVNESSGEEGQTGLFCIEDALISIADGPVLEFKARLGYNASSS.

The helical transmembrane segment at 9–29 (VSWLCALFTAIALYCIAVAFY) threads the bilayer. Cys-464 is a heme binding site.

This sequence belongs to the cytochrome P450 family. Heme serves as cofactor.

The protein localises to the membrane. It functions in the pathway secondary metabolite biosynthesis. Cytochrome P450 monooxygenase; part of the fragmented gene cluster that mediates the biosynthesis of fusarochromene, a tryptophan-derived metabolite closely related to a group of mycotoxins including fusarochromanone. Within the pathway, fscF catalyzes the epoxidation of desacetylfusarochromene which opens the way to the production of fusarochromanones. The first step of the pathway is the epimerization of L-tryptophan to D-tryptophan in the presence of the NRPS-like tryptophan epimerase fscC. D-tryptophan is subsequently hydroxylated by the tryptophan 6-hydroxylase fscE to yield 6-hydroxytryptophan. The pyrrole ring undergoes cleavaged by the tryptophan 2,3-dioxygenase fscD and is finally converted to 4-hydroxykyrunenine by the hydrolase fscH. The NRPS-like oxidoreductase fscA reduces the carboxyl group to primary alcohol and the DMATS-type prenyltransferase fscG performs prenylation, followed by the formation of a chromene ring catalyzed by the oxidoreductase fscI, which leads to desacetylfusarochromene. Epoxidation by fscF and rearrangement reactions of chromene double bonds convert compound desacetylfusarochromene to fusarochromanones. Although specific acetyltransferases were not found near the fsc gene cluster, several predicted enzymes containing the N-acetyltransferase superfamily domain are present in the genome of F.equiseti. These predicted enzymes may have the potential to convert desacetylfusarochromene to fusarochromene. This chain is Cytochrome P450 monooxygenase fscF, found in Fusarium equiseti (Fusarium scirpi).